The sequence spans 157 residues: Protein FAM218A (157 aa).

Residues 104 to 127 are disordered; that stretch reads PAVTPPKLPGHSKSEGPPGKVRKR.

This is Protein FAM218A (FAM218A) from Homo sapiens (Human).